Consider the following 1048-residue polypeptide: Putative cation efflux system protein SilA (1048 aa).

14 helical membrane passes run 14–34 (FLVM…IINT), 125–145 (VSSE…YALV), 338–358 (LSSK…LFLW), 363–383 (ALVA…VMHF), 391–411 (MSLG…IVMI), 446–466 (VGPA…PIFT), 485–505 (SMAG…GFWI), 539–559 (TLLV…QVGG), 737–757 (GMTV…AMVG), 871–891 (KLKL…YLAF), 897–917 (ALLI…FLYW), 928–948 (TGFI…LMYL), 985–1005 (AMTV…TGAG), and 1012–1032 (IAAP…FIIP).

The protein belongs to the resistance-nodulation-cell division (RND) (TC 2.A.6) family.

Its subcellular location is the cell inner membrane. In terms of biological role, component of the sil cation-efflux system that confers resistance to silver. May be part of a three-component cation/proton antiporter. This Salmonella typhimurium protein is Putative cation efflux system protein SilA (silA).